The primary structure comprises 194 residues: FMN-dependent NADH:quinone oxidoreductase (194 aa).

FMN-binding positions include Ser10, 16 to 18 (SQS), 91 to 94 (MYNF), and 135 to 138 (TRGG).

It belongs to the azoreductase type 1 family. Homodimer. It depends on FMN as a cofactor.

It carries out the reaction 2 a quinone + NADH + H(+) = 2 a 1,4-benzosemiquinone + NAD(+). The enzyme catalyses N,N-dimethyl-1,4-phenylenediamine + anthranilate + 2 NAD(+) = 2-(4-dimethylaminophenyl)diazenylbenzoate + 2 NADH + 2 H(+). Quinone reductase that provides resistance to thiol-specific stress caused by electrophilic quinones. Functionally, also exhibits azoreductase activity. Catalyzes the reductive cleavage of the azo bond in aromatic azo compounds to the corresponding amines. The polypeptide is FMN-dependent NADH:quinone oxidoreductase (Vibrio parahaemolyticus serotype O3:K6 (strain RIMD 2210633)).